A 2207-amino-acid chain; its full sequence is Desmoplakin-B (2207 aa).

Coiled-coil stretches lie at residues 506–916 (MEEL…EAGK), 952–1000 (AKHA…EQGR), and 1029–1063 (TERL…LLKN). The span at 905–924 (KQRQVAEEEAGKRRRTESQL) shows a compositional bias: basic and acidic residues. A disordered region spans residues 905-933 (KQRQVAEEEAGKRRRTESQLEKSSQAMRE). 9 Plectin repeats span residues 1369–1406 (LLEA…DKKQ), 1407–1445 (LLIA…TLRL), 1446–1483 (LQAQ…YQAL), 1571–1609 (YLRG…TLEL), 1610–1647 (LEAQ…KDKL), 1685–1723 (LLEA…NQIL), 1783–1811 (IVDP…FLEL), 1992–2029 (LLEA…MANR), and 2068–2106 (FLEF…AQRL). Residues 2155–2164 (ISSPYNLSNP) show a composition bias toward polar residues. Residues 2155-2207 (ISSPYNLSNPGSASGSRSGSRRGSVDYSLSPSSSSRYSSFSYSRTSFSSRSLS) are disordered. A compositionally biased stretch (low complexity) spans 2165-2207 (GSASGSRSGSRRGSVDYSLSPSSSSRYSSFSYSRTSFSSRSLS).

Belongs to the plakin or cytolinker family.

It is found in the cell junction. It localises to the desmosome. The protein resides in the cell membrane. Involved in the organization of desmosome cell-cell junctions. Of particular importance in cell adhesion in the skin and during cardiac development. May also play a role in the regulation of Wnt, TGF-beta and Hippo signaling pathways. In Danio rerio (Zebrafish), this protein is Desmoplakin-B.